Here is a 234-residue protein sequence, read N- to C-terminus: Large ribosomal subunit protein bL25 (234 aa).

It belongs to the bacterial ribosomal protein bL25 family. CTC subfamily. Part of the 50S ribosomal subunit; part of the 5S rRNA/L5/L18/L25 subcomplex. Contacts the 5S rRNA. Binds to the 5S rRNA independently of L5 and L18.

In terms of biological role, this is one of the proteins that binds to the 5S RNA in the ribosome where it forms part of the central protuberance. In Rhodopseudomonas palustris (strain BisA53), this protein is Large ribosomal subunit protein bL25.